Here is a 648-residue protein sequence, read N- to C-terminus: MRIAKILLPAAKLFPLDYLIPESLVLNIGDLVIVPFRSKELTGIVWEFATIPEASKLKTVKEKVPLDLSITSEVLELIKWLSSYYMSELGSIAKLVLPIDIAEKPIKVKEQKVNNSFVLPDLSEEQKQAVTILNESNKPTLIKGVTGSGKTEIYFHLIADYLVKGKQVLIMLPEIALSTQIINRFIERFGFEPIIWNSSVTKAQKKMILRGILSDKVKVVIGARSSLFLPFKNLGLVVIDEEHDDSYKQDDGILYNARDTAIVRGTFDKAQIVLCSATPSIETMYNIEIGKYQLVTLVNRYNNVDLPNIEIIDMTKEKLSKNSYLSKILIEAIKDNLDNKKQVLLFLNRRGYAPLMLCKACGHRFTCKFCSSWMVVHKATKKLECHHCGYQSKIFSSCPECLEDETLTICGPGIERIEEEAKALFPENKIAVISKDHAKNPERIAQLLHQMENLEIDILIGTQMITKGYHFPNLTLVGVIDADLGSNNADLRASERTFQLLHQVGGRAGRGDGKGVVYLQSYYPDNIIFSYVKAGDEDSFFANELEIRKSADMPPFSKTASVILSGSNESKILEIARAMVRIAPKANVKILGPASSLMSKLAGKYRYRILIIADKKFNLQKYLKFWLSLIKIPSFCHLKIDIDPKSFY.

Residues 131-297 form the Helicase ATP-binding domain; it reads TILNESNKPT…EIGKYQLVTL (167 aa). 144–151 contacts ATP; the sequence is GVTGSGKT. The short motif at 240 to 243 is the DEAH box element; the sequence is DEEH. Positions 358, 361, 367, 370, 385, 388, 398, and 401 each coordinate Zn(2+). In terms of domain architecture, Helicase C-terminal spans 393-548; the sequence is KIFSSCPECL…SFFANELEIR (156 aa).

The protein belongs to the helicase family. PriA subfamily. In terms of assembly, component of the replication restart primosome. It depends on Zn(2+) as a cofactor.

The enzyme catalyses Couples ATP hydrolysis with the unwinding of duplex DNA by translocating in the 3'-5' direction.. It catalyses the reaction ATP + H2O = ADP + phosphate + H(+). Its function is as follows. Initiates the restart of stalled replication forks, which reloads the replicative helicase on sites other than the origin of replication. Recognizes and binds to abandoned replication forks and remodels them to uncover a helicase loading site. Promotes assembly of the primosome at these replication forks. This chain is Replication restart protein PriA, found in Rickettsia felis (strain ATCC VR-1525 / URRWXCal2) (Rickettsia azadi).